Here is a 73-residue protein sequence, read N- to C-terminus: Translation initiation factor IF-1 (73 aa).

Residues methionine 1–arginine 73 enclose the S1-like domain.

This sequence belongs to the IF-1 family. As to quaternary structure, component of the 30S ribosomal translation pre-initiation complex which assembles on the 30S ribosome in the order IF-2 and IF-3, IF-1 and N-formylmethionyl-tRNA(fMet); mRNA recruitment can occur at any time during PIC assembly.

The protein localises to the cytoplasm. One of the essential components for the initiation of protein synthesis. Stabilizes the binding of IF-2 and IF-3 on the 30S subunit to which N-formylmethionyl-tRNA(fMet) subsequently binds. Helps modulate mRNA selection, yielding the 30S pre-initiation complex (PIC). Upon addition of the 50S ribosomal subunit IF-1, IF-2 and IF-3 are released leaving the mature 70S translation initiation complex. The chain is Translation initiation factor IF-1 from Acidothermus cellulolyticus (strain ATCC 43068 / DSM 8971 / 11B).